A 317-amino-acid chain; its full sequence is Phospho-N-acetylmuramoyl-pentapeptide-transferase (317 aa).

9 consecutive transmembrane segments (helical) span residues 3 to 23 (VIIY…PLFI), 48 to 68 (GTPT…MIIM), 72 to 92 (LNSN…IGLI), 112 to 132 (FLLQ…RFGS), 141 to 161 (ITWT…FVAV), 171 to 191 (LDGL…VVSF), 193 to 213 (WHQY…LGFL), 238 to 258 (AIAL…IYVI), and 297 to 317 (VVSV…LSLI).

This sequence belongs to the glycosyltransferase 4 family. MraY subfamily. Requires Mg(2+) as cofactor.

Its subcellular location is the cell membrane. It carries out the reaction UDP-N-acetyl-alpha-D-muramoyl-L-alanyl-gamma-D-glutamyl-meso-2,6-diaminopimeloyl-D-alanyl-D-alanine + di-trans,octa-cis-undecaprenyl phosphate = di-trans,octa-cis-undecaprenyl diphospho-N-acetyl-alpha-D-muramoyl-L-alanyl-D-glutamyl-meso-2,6-diaminopimeloyl-D-alanyl-D-alanine + UMP. Its pathway is cell wall biogenesis; peptidoglycan biosynthesis. Its function is as follows. Catalyzes the initial step of the lipid cycle reactions in the biosynthesis of the cell wall peptidoglycan: transfers peptidoglycan precursor phospho-MurNAc-pentapeptide from UDP-MurNAc-pentapeptide onto the lipid carrier undecaprenyl phosphate, yielding undecaprenyl-pyrophosphoryl-MurNAc-pentapeptide, known as lipid I. The sequence is that of Phospho-N-acetylmuramoyl-pentapeptide-transferase from Clostridium acetobutylicum (strain ATCC 824 / DSM 792 / JCM 1419 / IAM 19013 / LMG 5710 / NBRC 13948 / NRRL B-527 / VKM B-1787 / 2291 / W).